Consider the following 177-residue polypeptide: Cell division protein ZapC (177 aa).

The protein belongs to the ZapC family. Interacts directly with FtsZ.

It is found in the cytoplasm. Its function is as follows. Contributes to the efficiency of the cell division process by stabilizing the polymeric form of the cell division protein FtsZ. Acts by promoting interactions between FtsZ protofilaments and suppressing the GTPase activity of FtsZ. The sequence is that of Cell division protein ZapC from Shewanella frigidimarina (strain NCIMB 400).